Consider the following 303-residue polypeptide: DCN1-like protein 3 (303 aa).

2 disordered regions span residues methionine 1–isoleucine 41 and glutamate 62–glutamate 83. Glycine 2 is lipidated: N-myristoyl glycine. The 193-residue stretch at serine 85–methionine 277 folds into the DCUN1 domain. The segment at glutamate 284–threonine 303 is disordered. Residues threonine 294–threonine 303 show a composition bias toward polar residues.

May interact (via the DCUN1 domain) with unneddylated cullins.

The protein localises to the cell membrane. It localises to the cytoplasm. Its subcellular location is the nucleus. It is found in the perinuclear region. Contributes to the neddylation of all cullins by transferring NEDD8 from N-terminally acetylated NEDD8-conjugating E2s enzyme to different cullin C-terminal domain-RBX complexes. At the cell membrane, can promote and as well inhibit cullins neddylation. The polypeptide is DCN1-like protein 3 (Xenopus tropicalis (Western clawed frog)).